The sequence spans 167 residues: uncharacterized protein (167 aa).

A disordered region spans residues 95-114 (AHSLHHQSHQSDVQVHAKGN).

This is an uncharacterized protein from Haemophilus influenzae (Bacteriophage HP1).